A 302-amino-acid chain; its full sequence is 33 kDa chaperonin (302 aa).

2 cysteine pairs are disulfide-bonded: C234–C236 and C267–C270.

The protein belongs to the HSP33 family. Post-translationally, under oxidizing conditions two disulfide bonds are formed involving the reactive cysteines. Under reducing conditions zinc is bound to the reactive cysteines and the protein is inactive.

It localises to the cytoplasm. Redox regulated molecular chaperone. Protects both thermally unfolding and oxidatively damaged proteins from irreversible aggregation. Plays an important role in the bacterial defense system toward oxidative stress. This Neisseria gonorrhoeae (strain NCCP11945) protein is 33 kDa chaperonin.